Consider the following 921-residue polypeptide: Inter-alpha-trypsin inhibitor heavy chain H4 (921 aa).

A signal peptide spans 1–27 (MKTLSPTGYGLLLVLPLLLAVLQSTTA). The VIT domain occupies 28–146 (HKNDINIYSL…KVTFELVYEE (119 aa)). N-linked (GlcNAc...) asparagine glycans are attached at residues Asn-80, Asn-205, and Asn-242. Positions 270 to 428 (PKNVIFVIDT…YAFLEKMALE (159 aa)) constitute a VWFA domain. 2 N-linked (GlcNAc...) asparagine glycosylation sites follow: Asn-513 and Asn-577. Positions 591-646 (KPEGQEQSQVAEKPVENGNRQGNTHSGHSSFQFHSVGDRTSRLTGGSSVDPVFSHR) are disordered. The segment covering 608 to 623 (GNRQGNTHSGHSSFQF) has biased composition (polar residues). Thr-712 carries an O-linked (GalNAc...) threonine glycan. Residues Cys-738 and Cys-916 are joined by a disulfide bond.

This sequence belongs to the ITIH family. Interacts (via C-terminus) with DNAJC1 (via SANT 2 domain). In terms of processing, appears to be both N- and O-glycosylated. Post-translationally, cleaved by plasma kallikrein to yield 55- and 25-kDa fragments. As to expression, liver specific.

The protein localises to the secreted. Its function is as follows. Type II acute-phase protein (APP) involved in inflammatory responses to trauma. May also play a role in liver development or regeneration. This Sus scrofa (Pig) protein is Inter-alpha-trypsin inhibitor heavy chain H4 (ITIH4).